A 248-amino-acid polypeptide reads, in one-letter code: MGILKKTIFIGGIYGLGVYIGAVAWRLRKDVLNYESRQKSDLLIPNSNSISIYNQIADKYSRKITREEIFSGIYFLRYFLLRNAKGDVLEVGSGPGTNFPFYKWKKINTLTLVEPAEKMREIADARAKKKVPPNVLYRQFADLRQLPPNQSYDTIIQTFCICSQEKAVEQLNNYRSLLRSDGRILLIEHGKGKYKFLNRILNAYAESHYESWGCVWNRDIEQLLEDSELTIDSCKRFNFGTTYVIEAH.

A helical transmembrane segment spans residues 7-25; that stretch reads TIFIGGIYGLGVYIGAVAW.

The protein belongs to the methyltransferase superfamily. METL family.

It is found in the mitochondrion inner membrane. Functionally, probable methyltransferase. This is an uncharacterized protein from Schizosaccharomyces pombe (strain 972 / ATCC 24843) (Fission yeast).